Consider the following 229-residue polypeptide: Aldehyde oxidoreductase iron-sulfur-binding subunit PaoA (229 aa).

The disordered stretch occupies residues 1–21 (MSNQGEYPEDNRVGKHEPHDL). Positions 1 to 53 (MSNQGEYPEDNRVGKHEPHDLSLTRRDLIKVSAATAATAVVYPHSTLAASVPA) form a signal peptide, tat-type signal. Residues 9–21 (EDNRVGKHEPHDL) are compositionally biased toward basic and acidic residues. Residues 61–137 (MPLTLKVNGK…GAEITTIEGL (77 aa)) enclose the 2Fe-2S ferredoxin-type domain. 9 residues coordinate [2Fe-2S] cluster: C99, C104, G105, C107, C119, C158, C161, C208, and C210.

In terms of assembly, heterotrimer composed of PaoA, PaoB and PaoC. It depends on [2Fe-2S] cluster as a cofactor. In terms of processing, exported by the Tat system. The position of the signal peptide cleavage has not been experimentally proven.

It localises to the periplasm. It catalyses the reaction an aldehyde + A + H2O = a carboxylate + AH2 + H(+). With respect to regulation, the complex requires PaoD for activity. Its function is as follows. Oxidizes aldehydes to the corresponding carboxylic acids with a preference for aromatic aldehydes. It might play a role in the detoxification of aldehydes to avoid cell damage. The polypeptide is Aldehyde oxidoreductase iron-sulfur-binding subunit PaoA (Escherichia coli (strain K12)).